A 234-amino-acid polypeptide reads, in one-letter code: Triosephosphate isomerase (234 aa).

Residue 8–10 (NFK) coordinates substrate. His-90 serves as the catalytic Electrophile. The active-site Proton acceptor is the Glu-159. 2 residues coordinate substrate: Gly-165 and Ser-197.

The protein belongs to the triosephosphate isomerase family. Homodimer.

It localises to the cytoplasm. The enzyme catalyses D-glyceraldehyde 3-phosphate = dihydroxyacetone phosphate. Its pathway is carbohydrate biosynthesis; gluconeogenesis. The protein operates within carbohydrate degradation; glycolysis; D-glyceraldehyde 3-phosphate from glycerone phosphate: step 1/1. Functionally, involved in the gluconeogenesis. Catalyzes stereospecifically the conversion of dihydroxyacetone phosphate (DHAP) to D-glyceraldehyde-3-phosphate (G3P). The polypeptide is Triosephosphate isomerase (Helicobacter pylori (strain Shi470)).